The chain runs to 256 residues: Thiazole synthase (256 aa).

Lys-95 acts as the Schiff-base intermediate with DXP in catalysis. 1-deoxy-D-xylulose 5-phosphate-binding positions include Gly-156, 183-184, and 205-206; these read AG and NT.

This sequence belongs to the ThiG family. In terms of assembly, homotetramer. Forms heterodimers with either ThiH or ThiS.

The protein resides in the cytoplasm. It catalyses the reaction [ThiS sulfur-carrier protein]-C-terminal-Gly-aminoethanethioate + 2-iminoacetate + 1-deoxy-D-xylulose 5-phosphate = [ThiS sulfur-carrier protein]-C-terminal Gly-Gly + 2-[(2R,5Z)-2-carboxy-4-methylthiazol-5(2H)-ylidene]ethyl phosphate + 2 H2O + H(+). It participates in cofactor biosynthesis; thiamine diphosphate biosynthesis. Functionally, catalyzes the rearrangement of 1-deoxy-D-xylulose 5-phosphate (DXP) to produce the thiazole phosphate moiety of thiamine. Sulfur is provided by the thiocarboxylate moiety of the carrier protein ThiS. In vitro, sulfur can be provided by H(2)S. In Gluconacetobacter diazotrophicus (strain ATCC 49037 / DSM 5601 / CCUG 37298 / CIP 103539 / LMG 7603 / PAl5), this protein is Thiazole synthase.